The sequence spans 385 residues: Nod factor hydrolase protein 1 (385 aa).

The first 21 residues, M1–A21, serve as a signal peptide directing secretion. A GH18 domain is found at R36 to S385. N-linked (GlcNAc...) asparagine glycosylation is found at N115 and N134. The active-site Proton donor is the E153. 2 N-linked (GlcNAc...) asparagine glycosylation sites follow: N233 and N247.

It belongs to the glycosyl hydrolase 18 family. Chitinase class V subfamily.

Its function is as follows. Symbiotic enzyme that hydrolytically inactivates Nod factors (NFs) with a C16:2 acyl chain produced by the microsymbiont Sinorhizobium meliloti. NFs are lipo-chitooligosaccharide signaling molecules produced by nitrogen-fixing rhizobia to initiate nodulation (symbiosis) on the roots of legumes. Controls NF hydrolysis at the stage of root hair infection. Involved in the regulation of growth and branching of mature nodules. Modulates NF levels and signaling to complete transition of infected nodules to functional nitrogen-fixing organs. Lacks chitinase activity in vitro toward glycol chitin, carboxymethyl-chitin, colloidal chitin, and the chitin oligosaccharides (N-acetylglucosamine) (GlcNAc)6 and (GlcNAc)5. This Medicago truncatula (Barrel medic) protein is Nod factor hydrolase protein 1.